The following is a 276-amino-acid chain: MALVKTKPTSPGRRSMVKVVNPDLHKGAPHAPLLEKQFQKSGRNNNGHITTRHKGGGHKHHYRIVDFKRNDKDGIPAKIERLEYDPNRSANIALVLFADGERRYIIAPKGAVVGQAVANGPEAPIKAGNNLPIRNIPVGTTIHCVEILPGKGAQIARSAGTSAVLLAREGIYAQVRLRSGEVRRVHIECRATIGEVGNEEHSLRQIGKAGATRWRGIRPTVRGVAMNPVDHPHGGGEGKTAAGRDPVSPWGTPTKGYRTRSNKRTTSMIVQRRHKR.

2 disordered regions span residues 37 to 59 (QFQK…GGHK) and 224 to 276 (VAMN…RHKR). The segment covering 50–59 (TTRHKGGGHK) has biased composition (basic residues).

This sequence belongs to the universal ribosomal protein uL2 family. As to quaternary structure, part of the 50S ribosomal subunit. Forms a bridge to the 30S subunit in the 70S ribosome.

Functionally, one of the primary rRNA binding proteins. Required for association of the 30S and 50S subunits to form the 70S ribosome, for tRNA binding and peptide bond formation. It has been suggested to have peptidyltransferase activity; this is somewhat controversial. Makes several contacts with the 16S rRNA in the 70S ribosome. In Ralstonia nicotianae (strain ATCC BAA-1114 / GMI1000) (Ralstonia solanacearum), this protein is Large ribosomal subunit protein uL2.